Here is a 1300-residue protein sequence, read N- to C-terminus: Insulin receptor-related protein (1300 aa).

An N-terminal signal peptide occupies residues 1–26 (MAVPALWPWGVHLLMSLLSLGSGLDT). N-linked (GlcNAc...) asparagine glycosylation is found at N47 and N100. Intrachain disulfides connect C214-C222, C216-C228, C229-C237, C233-C246, C249-C258, C262-C274, C280-C300, C304-C317, and C320-C324. N-linked (GlcNAc...) asparagine glycosylation occurs at N311. Residues N411, N492, N528, N616, N634, N756, N885, and N898 are each glycosylated (N-linked (GlcNAc...) asparagine). Fibronectin type-III domains follow at residues 483–603 (QTRT…TLPA) and 607–707 (VPQD…AQEV). C657 and C864 form a disulfide bridge. The Extracellular portion of the chain corresponds to 747–921 (EAGLLRLGKN…LEEEDTGGMR (175 aa)). In terms of domain architecture, Fibronectin type-III 3 spans 818-913 (IPGKVAWKAA…GVTFYITDLE (96 aa)). Residues 922 to 943 (IFLTVTPVGFMLLVTLAALGFF) form a helical membrane-spanning segment. The Cytoplasmic portion of the chain corresponds to 944-1300 (YSRKRNSTLY…YSAPNGGPGH (357 aa)). Residues 979–1254 (IAIIRELGQG…RIQDELRPSF (276 aa)) form the Protein kinase domain. ATP-binding positions include 985–993 (LGQGSFGMV) and K1013. The Proton acceptor role is filled by D1115. Phosphotyrosine; by autocatalysis is present on residues Y1145 and Y1146. Residues 1273-1300 (LPTEAEPDSPPTLNGASDYSAPNGGPGH) are disordered.

The protein belongs to the protein kinase superfamily. Tyr protein kinase family. Insulin receptor subfamily. Probable tetramer of 2 alpha and 2 beta chains linked by disulfide bonds. The alpha chains contribute to the formation of the ligand-binding domain, while the beta chains carry the kinase domain. In terms of processing, autophosphorylated on tyrosine residues between pH 7.9 and pH 10.5. In terms of tissue distribution, highly expressed in the islets as well as in pancreatic beta-cells.

The protein resides in the membrane. The enzyme catalyses L-tyrosyl-[protein] + ATP = O-phospho-L-tyrosyl-[protein] + ADP + H(+). In terms of biological role, receptor with tyrosine-protein kinase activity. Functions as a pH sensing receptor which is activated by increased extracellular pH. Activates an intracellular signaling pathway that involves IRS1 and AKT1/PKB. This chain is Insulin receptor-related protein (Insrr), found in Mus musculus (Mouse).